The primary structure comprises 209 residues: Large ribosomal subunit protein uL3 (209 aa).

The segment at 124-156 (KRHNFSGGQRTHGQSDRQRAPGSVGGSSDPSRV) is disordered.

It belongs to the universal ribosomal protein uL3 family. In terms of assembly, part of the 50S ribosomal subunit. Forms a cluster with proteins L14 and L19.

One of the primary rRNA binding proteins, it binds directly near the 3'-end of the 23S rRNA, where it nucleates assembly of the 50S subunit. The sequence is that of Large ribosomal subunit protein uL3 from Pelodictyon phaeoclathratiforme (strain DSM 5477 / BU-1).